The following is a 294-amino-acid chain: Homoserine kinase (294 aa).

84–94 (PFSRGLGSSSA) serves as a coordination point for ATP.

Belongs to the GHMP kinase family. Homoserine kinase subfamily.

The protein resides in the cytoplasm. It catalyses the reaction L-homoserine + ATP = O-phospho-L-homoserine + ADP + H(+). The protein operates within amino-acid biosynthesis; L-threonine biosynthesis; L-threonine from L-aspartate: step 4/5. Functionally, catalyzes the ATP-dependent phosphorylation of L-homoserine to L-homoserine phosphate. The sequence is that of Homoserine kinase from Campylobacter concisus (strain 13826).